We begin with the raw amino-acid sequence, 151 residues long: Deoxyuridine 5'-triphosphate nucleotidohydrolase (151 aa).

Residues 70–72 (RSG), N83, 87–89 (LID), and M97 contribute to the substrate site.

Belongs to the dUTPase family. It depends on Mg(2+) as a cofactor.

It carries out the reaction dUTP + H2O = dUMP + diphosphate + H(+). It functions in the pathway pyrimidine metabolism; dUMP biosynthesis; dUMP from dCTP (dUTP route): step 2/2. Functionally, this enzyme is involved in nucleotide metabolism: it produces dUMP, the immediate precursor of thymidine nucleotides and it decreases the intracellular concentration of dUTP so that uracil cannot be incorporated into DNA. This is Deoxyuridine 5'-triphosphate nucleotidohydrolase from Pseudomonas fluorescens (strain Pf0-1).